Consider the following 397-residue polypeptide: Acetate kinase (397 aa).

Residue Asn8 participates in Mg(2+) binding. Lys15 provides a ligand contact to ATP. Arg89 is a substrate binding site. Asp146 serves as the catalytic Proton donor/acceptor. ATP contacts are provided by residues 206–210, 281–283, and 329–333; these read HLGNG, DLR, and GIGEN. Glu382 provides a ligand contact to Mg(2+).

This sequence belongs to the acetokinase family. As to quaternary structure, homodimer. Requires Mg(2+) as cofactor. The cofactor is Mn(2+).

The protein resides in the cytoplasm. The catalysed reaction is acetate + ATP = acetyl phosphate + ADP. Its pathway is metabolic intermediate biosynthesis; acetyl-CoA biosynthesis; acetyl-CoA from acetate: step 1/2. Its function is as follows. Catalyzes the formation of acetyl phosphate from acetate and ATP. Can also catalyze the reverse reaction. This chain is Acetate kinase, found in Bacillus cytotoxicus (strain DSM 22905 / CIP 110041 / 391-98 / NVH 391-98).